Reading from the N-terminus, the 211-residue chain is Uridine kinase (211 aa).

Position 13–20 (13–20) interacts with ATP; it reads GGTASGKT.

Belongs to the uridine kinase family.

It is found in the cytoplasm. It carries out the reaction uridine + ATP = UMP + ADP + H(+). The enzyme catalyses cytidine + ATP = CMP + ADP + H(+). It participates in pyrimidine metabolism; CTP biosynthesis via salvage pathway; CTP from cytidine: step 1/3. It functions in the pathway pyrimidine metabolism; UMP biosynthesis via salvage pathway; UMP from uridine: step 1/1. This is Uridine kinase from Thermus thermophilus (strain ATCC BAA-163 / DSM 7039 / HB27).